A 141-amino-acid chain; its full sequence is Ribosome-binding factor A (141 aa).

The disordered stretch occupies residues 120 to 141 (DEALRAQSAGARPAGDEDPYKP).

The protein belongs to the RbfA family. As to quaternary structure, monomer. Binds 30S ribosomal subunits, but not 50S ribosomal subunits or 70S ribosomes.

It is found in the cytoplasm. Functionally, one of several proteins that assist in the late maturation steps of the functional core of the 30S ribosomal subunit. Associates with free 30S ribosomal subunits (but not with 30S subunits that are part of 70S ribosomes or polysomes). Required for efficient processing of 16S rRNA. May interact with the 5'-terminal helix region of 16S rRNA. This is Ribosome-binding factor A from Corynebacterium jeikeium (strain K411).